The primary structure comprises 238 residues: 3-dehydroquinate dehydratase (238 aa).

3-dehydroquinate-binding positions include 35 to 37 (ELR) and arginine 70. Histidine 133 functions as the Proton donor/acceptor in the catalytic mechanism. Catalysis depends on lysine 160, which acts as the Schiff-base intermediate with substrate. Arginine 202 and glutamine 225 together coordinate 3-dehydroquinate.

Belongs to the type-I 3-dehydroquinase family. As to quaternary structure, homodimer.

It catalyses the reaction 3-dehydroquinate = 3-dehydroshikimate + H2O. The protein operates within metabolic intermediate biosynthesis; chorismate biosynthesis; chorismate from D-erythrose 4-phosphate and phosphoenolpyruvate: step 3/7. In terms of biological role, involved in the third step of the chorismate pathway, which leads to the biosynthesis of aromatic amino acids. Catalyzes the cis-dehydration of 3-dehydroquinate (DHQ) and introduces the first double bond of the aromatic ring to yield 3-dehydroshikimate. The chain is 3-dehydroquinate dehydratase from Staphylococcus aureus (strain Mu3 / ATCC 700698).